Here is an 854-residue protein sequence, read N- to C-terminus: Protein unc-33 (854 aa).

3 disordered regions span residues 57-114, 130-327, and 794-854; these read ETVS…IPAP, ELFG…DGNG, and VERV…TGFW. Polar residues-rich tracts occupy residues 58-68 and 75-97; these read TVSNKSRSSEG and RPNS…TSAR. The span at 193 to 202 shows a compositional bias: basic and acidic residues; it reads KVLRGEKSTP. Acidic residues predominate over residues 240 to 257; sequence VDDEEEPEAEAQEMEEPQ. The span at 279 to 298 shows a compositional bias: basic and acidic residues; the sequence is HPSEDGDSTRNGETPTDRRN. Over residues 802–811 the composition is skewed to polar residues; sequence SSQQQKPQQN. Basic and acidic residues predominate over residues 816-827; the sequence is NSGDFDRNRTKV.

This sequence belongs to the metallo-dependent hydrolases superfamily. Hydantoinase/dihydropyrimidinase family. In terms of assembly, isoform a: Probable monomer. Isoform b: Probable homodimer. Isoform c: Probable homodimer. Probable heterodimer composed of isoform b and isoform c. Interacts with unc-14 and kinesin-1 motor complex light chain klc-1; both interactions regulate unc-33 neurite localization. Interacts with fln-1 (via calponin-homology (CH) domains and filamin repeat 18-19). Isoform c: Interacts with vab-8 isoform a. As to expression, expressed in ventral cord and nerve ring (at protein level). Isoform a: Expressed in nerve ring (at protein level). Expressed in the nervous system, two amphid socket cells and weakly in non-neuronal pharyngeal cells.

The protein localises to the cell projection. The protein resides in the axon. Its subcellular location is the dendrite. Functionally, during neurogenesis, plays an essential role in axonal guidance and outgrowth by regulating the polarization of both microtubule and actin cytoskeletons. Establishes the asymmetry of axonal and dendrite microtubules and the polarized sorting of neuronal proteins. This is achieved in part by regulating the localization of kinesin-like protein unc-104. In neurons without a distal microtubule-organizing center (MTOC), also controls the organization of microtubules in dendrites. During the dorso-ventral axonal guidance and outgrowth of VD neurons, required downstream of Rac GTPases ced-10 and mig-2 to inhibit growth cone filopodial protrusion mediated by the unc-6/netrin receptor unc-40-unc-5. Specifically, regulates growth cone filopodial protrusion polarity, and thus migration, by promoting F-actin polarization and by restricting plus-end microtubule accumulation in the growth cone. Probably downstream of mab-20/Sema2a and mab-20 receptor plx-2, regulates the guidance of DD/VD neuron axons by modulating fln-1 interaction with F-actin which results in the remodeling of the actin cytoskeleton. In hermaphrodites, involved in sex myoblast (SM) migration by regulating the gonad-dependent repulsion of SMs. In neurons, required for the polarized sorting of axonal proteins. In PLM neuron, regulates innexin unc-9 gap junction turnover by suppressing unc-9 transport out of gap junctions. Plays a role in locomotion and egg-laying. In terms of biological role, in PLM neuron, regulates innexin unc-9 gap junction turnover by suppressing unc-9 transport out of gap junctions. This is Protein unc-33 from Caenorhabditis elegans.